The following is a 396-amino-acid chain: Cysteine desulfurase (396 aa).

Pyridoxal 5'-phosphate-binding positions include 71-72, Asn148, Gln176, and 196-198; these read GT and SGH. At Lys199 the chain carries N6-(pyridoxal phosphate)lysine. Thr231 lines the pyridoxal 5'-phosphate pocket. The Cysteine persulfide intermediate role is filled by Cys319. Residue Cys319 coordinates [2Fe-2S] cluster.

This sequence belongs to the class-V pyridoxal-phosphate-dependent aminotransferase family. NifS/IscS subfamily. Homodimer. Pyridoxal 5'-phosphate is required as a cofactor.

The catalysed reaction is (sulfur carrier)-H + L-cysteine = (sulfur carrier)-SH + L-alanine. Functionally, catalyzes the removal of elemental sulfur atoms from cysteine to produce alanine. Seems to participate in the biosynthesis of the nitrogenase metalloclusters by providing the inorganic sulfur required for the Fe-S core formation. The sequence is that of Cysteine desulfurase from Azotobacter chroococcum mcd 1.